The following is a 299-amino-acid chain: ATP phosphoribosyltransferase (299 aa).

This sequence belongs to the ATP phosphoribosyltransferase family. Long subfamily. Mg(2+) is required as a cofactor.

The protein resides in the cytoplasm. The catalysed reaction is 1-(5-phospho-beta-D-ribosyl)-ATP + diphosphate = 5-phospho-alpha-D-ribose 1-diphosphate + ATP. It participates in amino-acid biosynthesis; L-histidine biosynthesis; L-histidine from 5-phospho-alpha-D-ribose 1-diphosphate: step 1/9. Feedback inhibited by histidine. Functionally, catalyzes the condensation of ATP and 5-phosphoribose 1-diphosphate to form N'-(5'-phosphoribosyl)-ATP (PR-ATP). Has a crucial role in the pathway because the rate of histidine biosynthesis seems to be controlled primarily by regulation of HisG enzymatic activity. This Rhodopirellula baltica (strain DSM 10527 / NCIMB 13988 / SH1) protein is ATP phosphoribosyltransferase.